The following is a 267-amino-acid chain: Cysteine protease avirulence protein AvrPphB (267 aa).

G63 carries N-myristoyl glycine; by host lipidation. Residues C98, H212, and D227 contribute to the active site.

It belongs to the peptidase C58 family. In infected plant cells, the 28 kDa product interacts with PBS1. Autocleaved. This function is essential for myristoylation in infected plant cell and for eliciting the plant hypersensitive response. In terms of processing, myristoylation of 28 kDa product in infected plant cells; it mediates the localization to membranes.

It localises to the secreted. The protein localises to the host membrane. In terms of biological role, cysteine protease avirulence protein, which is essential during infection of plant cells from cultivar-specific of beans and Arabidopsis thaliana. The autocleavage of the protein is required for virulence function. May act by affecting the plant defense system. In plants lacking R3 or RPS5 resistance genes, it probably impairs the plant defense system and leads to the bacteria multiplication. In contrast, in plants containing the R3 or RPS5 protein, it is unable to induce disease symptoms, explaining its avirulence name. The 7 kDa product is required for the type-III translocation from Pseudomonas strains to the plant, but are partially dispensable for effector recognition following in planta expression. In infected plants, it acts by cleaving the PBS1 protein, which leads to resistance or disease, depending on the presence or absence of RPS5, respectively. Targets the Arabidopsis kinases PBS1, BIK1, PBL1, PBL2, PBL3, PBL5, PBL7, PBL9 and PBL11 for cleavage in vitro. Can block recognition of AvrB avirulence factor by plant cells by cleaving Arabidopsis RIPK kinase and suppressing Arabidopsis RPM1 activation. Cannot block AvrRpm1-induced activation of RPM1. The polypeptide is Cysteine protease avirulence protein AvrPphB (avrPph3) (Pseudomonas savastanoi pv. phaseolicola (Pseudomonas syringae pv. phaseolicola)).